The chain runs to 150 residues: Macrodomain Ter protein (150 aa).

Belongs to the MatP family. Homodimer.

The protein resides in the cytoplasm. Required for spatial organization of the terminus region of the chromosome (Ter macrodomain) during the cell cycle. Prevents early segregation of duplicated Ter macrodomains during cell division. Binds specifically to matS, which is a 13 bp signature motif repeated within the Ter macrodomain. This Escherichia coli (strain SMS-3-5 / SECEC) protein is Macrodomain Ter protein.